The primary structure comprises 83 residues: Small ribosomal subunit protein bS16 (83 aa).

It belongs to the bacterial ribosomal protein bS16 family.

In Pseudomonas aeruginosa (strain LESB58), this protein is Small ribosomal subunit protein bS16.